The primary structure comprises 154 residues: Large ribosomal subunit protein uL22 (154 aa).

The protein belongs to the universal ribosomal protein uL22 family. In terms of assembly, part of the 50S ribosomal subunit.

This protein binds specifically to 23S rRNA. It makes multiple contacts with different domains of the 23S rRNA in the assembled 50S subunit and ribosome. Functionally, the globular domain of the protein is located near the polypeptide exit tunnel on the outside of the subunit, while an extended beta-hairpin is found that lines the wall of the exit tunnel in the center of the 70S ribosome. The polypeptide is Large ribosomal subunit protein uL22 (Natronomonas pharaonis (strain ATCC 35678 / DSM 2160 / CIP 103997 / JCM 8858 / NBRC 14720 / NCIMB 2260 / Gabara) (Halobacterium pharaonis)).